A 1016-amino-acid polypeptide reads, in one-letter code: C2 domain-containing protein 5 (1016 aa).

Residues 1 to 109 (MPGKLKVKIV…EAATVISGWF (109 aa)) enclose the C2 domain. Ca(2+) contacts are provided by Asp-19, Asp-26, Asp-76, Asp-78, Ser-81, and Asp-84. The residue at position 197 (Ser-197) is a Phosphoserine; by PKB/AKT2. Phosphoserine occurs at positions 200 and 260. Residues 265-330 (LKEIPFNEDP…SGSAGKEGGP (66 aa)) are disordered. Residues 274–289 (PNPNTHSSGPSTPLKN) show a composition bias toward polar residues. Residues 290-318 (QTYSFSPSKSYSRQSSSSDTDLSLTPKTG) show a composition bias toward low complexity. Phosphoserine occurs at positions 293, 295, 304, 305, and 306. Thr-317 carries the phosphothreonine modification. Residues 319–328 (MGSGSAGKEG) are compositionally biased toward gly residues. Phosphoserine is present on Ser-323. At Thr-601 the chain carries Phosphothreonine. Residues 636 to 668 (VSEEMIGSPIPEPRQRSRLLRSQSESSDEVTEL) form a disordered region. Phosphoserine is present on residues Ser-643, Ser-657, Ser-659, Ser-661, and Ser-662. A Phosphothreonine modification is found at Thr-666. Residues Ser-671, Ser-817, and Ser-869 each carry the phosphoserine modification.

Ca(2+) is required as a cofactor. In terms of processing, phosphorylated on Ser-197 by active myristoylated kinase AKT2; insulin-stimulated phosphorylation by AKT2 regulates SLC2A4/GLUT4 translocation into the plasma membrane. As to expression, expressed in liver, muscle and fat.

It localises to the cytoplasmic vesicle membrane. It is found in the cytoplasm. The protein localises to the cell cortex. Its subcellular location is the cell membrane. The protein resides in the cell projection. It localises to the ruffle. Functionally, required for insulin-stimulated glucose transport and glucose transporter SLC2A4/GLUT4 translocation from intracellular glucose storage vesicle (GSV) to the plasma membrane (PM) in adipocytes. Binds phospholipid membranes in a calcium-dependent manner and is necessary for the optimal membrane fusion between SLC2A4/GLUT4 GSV and the PM. This chain is C2 domain-containing protein 5 (C2cd5), found in Mus musculus (Mouse).